A 545-amino-acid chain; its full sequence is MMGHRPVLVLSQNTKRESGRKVQSGNINAAKTIADIIRTCLGPKSMMKMLLDPMGGIVMTNDGNAILREIQVQHPAAKSMVEISRTQDEEVGDGTTSVIILAGEMLSVAEHFLEQQMHPTVVISAYRKALDDMISTLKKISIPVDINDSDMMLNIINSSITTKAISRWSSLACNIALDAVKMVQFEENGRKEIDIKKYARVEKIPGGIIEDSCVLRGVMINKDVTHPRMRRYIKNPRIVLLDSSLEYKKGESQTDIEITREEDFTRILQMEEEYIQQLCEDIIQLKPDVVITEKGISDLAQHYLMRANITAIRRVRKTDNNRIARACGARIVSRPEELREDDVGTGAGLLEIKKIGDEYFTFITDCKDPKACTILLRGASKEILSEVERNLQDAMQVCRNVLLDPQLVPGGGASEMAVAHALTEKSKAMTGVEQWPYRAVAQALEVIPRTLIQNCGASTIRLLTSLRAKHTQENCETWGVNGETGTLVDMKELGIWEPLAVKLQTYKTAVETAVLLLRIDDIVSGHKKKGDDQSRQGGAPDAGQE.

Position 1 is an N-acetylmethionine (methionine 1). The tract at residues 1 to 24 (MMGHRPVLVLSQNTKRESGRKVQS) is disordered. The residue at position 11 (serine 11) is a Phosphoserine. Lysine 15 participates in a covalent cross-link: Glycyl lysine isopeptide (Lys-Gly) (interchain with G-Cter in SUMO2). Residue glycine 42 participates in ADP binding. Glycine 42 is an ATP binding site. A Mg(2+)-binding site is contributed by aspartate 93. Glycine 94, threonine 95, threonine 96, serine 97, threonine 162, and lysine 163 together coordinate ADP. Glycine 94, threonine 95, and threonine 96 together coordinate ATP. Serine 170 bears the Phosphoserine mark. Lysine 222 bears the N6-acetyllysine mark. Residues serine 243 and serine 244 each carry the phosphoserine modification. Tyrosine 247 carries the phosphotyrosine modification. Glycyl lysine isopeptide (Lys-Gly) (interchain with G-Cter in SUMO2) cross-links involve residues lysine 248 and lysine 249. Serine 252 carries the phosphoserine modification. Cysteine 366 and cysteine 372 are joined by a disulfide. Lysine 381 participates in a covalent cross-link: Glycyl lysine isopeptide (Lys-Gly) (interchain with G-Cter in SUMO2). Glycine 411 lines the ADP pocket. An ATP-binding site is contributed by glycine 411. Phosphothreonine occurs at positions 430 and 459. Glycine 482, glutamate 483, glutamate 497, and lysine 502 together coordinate ADP. An ATP-binding site is contributed by glycine 482. Residue glutamate 497 participates in ATP binding. Positions 526–545 (HKKKGDDQSRQGGAPDAGQE) are disordered.

This sequence belongs to the TCP-1 chaperonin family. In terms of assembly, component of the chaperonin-containing T-complex (TRiC), a hexadecamer composed of two identical back-to-back stacked rings enclosing a protein folding chamber. Each ring is made up of eight different subunits: TCP1/CCT1, CCT2, CCT3, CCT4, CCT5, CCT6A/CCT6, CCT7, CCT8. Interacts with PACRG. Interacts with DNAAF4. Interacts with DLEC1.

It is found in the cytoplasm. It carries out the reaction ATP + H2O = ADP + phosphate + H(+). Its function is as follows. Component of the chaperonin-containing T-complex (TRiC), a molecular chaperone complex that assists the folding of actin, tubulin and other proteins upon ATP hydrolysis. The TRiC complex mediates the folding of WRAP53/TCAB1, thereby regulating telomere maintenance. As part of the TRiC complex may play a role in the assembly of BBSome, a complex involved in ciliogenesis regulating transports vesicles to the cilia. In Pongo abelii (Sumatran orangutan), this protein is T-complex protein 1 subunit gamma (CCT3).